The following is a 209-amino-acid chain: Protein ASG7 (209 aa).

Residues 1–49 (MTTLASSIEHKTKHLAAPFENDENPWMKKYCCQCKSCKMSVPVQPWLPR) are Lumenal-facing. A helical membrane pass occupies residues 50–70 (FFVFGILCPVFWLVNLLAWWF). Residues 71–184 (LQYWQPHELE…LLRKTFRDWN (114 aa)) are Cytoplasmic-facing. Residues Ser121, Ser123, and Ser125 each carry the phosphoserine modification. Thr153 is subject to Phosphothreonine. Residues 185–205 (LRSLLGLLIDSILIIFVVLLC) form a helical membrane-spanning segment. Topologically, residues 206–209 (KKSR) are lumenal.

It is found in the endomembrane system. Functionally, required for receptor inhibition of inappropriately expressed a-factor receptor (STE3) in MAT a cells. Inhibits signaling by relocalizing the G protein beta-gamma (STE4-STE18) subunit to intracellular membranes. May also be a mechanism for the down-regulation of the mating pheromone response after the zygotic fusion event, promoting the transition of the new diploid cell to vegetative growth. The protein is Protein ASG7 (ASG7) of Saccharomyces cerevisiae (strain ATCC 204508 / S288c) (Baker's yeast).